A 332-amino-acid polypeptide reads, in one-letter code: 5-dehydro-2-deoxygluconokinase (332 aa).

The protein belongs to the carbohydrate kinase PfkB family.

The catalysed reaction is 5-dehydro-2-deoxy-D-gluconate + ATP = 6-phospho-5-dehydro-2-deoxy-D-gluconate + ADP + H(+). It participates in polyol metabolism; myo-inositol degradation into acetyl-CoA; acetyl-CoA from myo-inositol: step 5/7. Its function is as follows. Catalyzes the phosphorylation of 5-dehydro-2-deoxy-D-gluconate (2-deoxy-5-keto-D-gluconate or DKG) to 6-phospho-5-dehydro-2-deoxy-D-gluconate (DKGP). This is 5-dehydro-2-deoxygluconokinase from Bacillus thuringiensis subsp. konkukian (strain 97-27).